Reading from the N-terminus, the 84-residue chain is PAMP-induced secreted peptide 2 (84 aa).

An N-terminal signal peptide occupies residues 1–24 (MMMNKNVLSSILFFMLIGSVLVES). The disordered stretch occupies residues 50–84 (KDSGPSPGEGHKVVDRKDTFRFVKHSGPSPSGPGH). Positions 58–70 (EGHKVVDRKDTFR) are enriched in basic and acidic residues. Pro77 and Pro79 each carry 4-hydroxyproline.

Contains 4-hydroxyproline; hydroxylated on Pro-77 and Pro-79.

It is found in the secreted. It localises to the extracellular space. Its subcellular location is the apoplast. Its function is as follows. Endogenous secreted peptide that acts as elicitor of immune response and positive regulator of defense response. Amplifies the immune response triggered by flg22, the active epitope of bacterial flagellin. Acts as a negative regulator of root growth. The chain is PAMP-induced secreted peptide 2 from Arabidopsis thaliana (Mouse-ear cress).